The primary structure comprises 161 residues: Regulator of ribonuclease activity A (161 aa).

Belongs to the RraA family. In terms of assembly, homotrimer. Binds to both RNA-binding sites in the C-terminal region of Rne and to RhlB.

It localises to the cytoplasm. In terms of biological role, globally modulates RNA abundance by binding to RNase E (Rne) and regulating its endonucleolytic activity. Can modulate Rne action in a substrate-dependent manner by altering the composition of the degradosome. Modulates RNA-binding and helicase activities of the degradosome. The chain is Regulator of ribonuclease activity A from Serratia proteamaculans (strain 568).